A 207-amino-acid chain; its full sequence is Large ribosomal subunit protein uL4 (207 aa).

Residues 50–76 (KTKTVSEVSGTTKKPFKQKGTGNARQG) are disordered.

Belongs to the universal ribosomal protein uL4 family. In terms of assembly, part of the 50S ribosomal subunit.

One of the primary rRNA binding proteins, this protein initially binds near the 5'-end of the 23S rRNA. It is important during the early stages of 50S assembly. It makes multiple contacts with different domains of the 23S rRNA in the assembled 50S subunit and ribosome. Functionally, forms part of the polypeptide exit tunnel. This Rickettsia canadensis (strain McKiel) protein is Large ribosomal subunit protein uL4.